Reading from the N-terminus, the 337-residue chain is Phosphate acyltransferase (337 aa).

Belongs to the PlsX family. In terms of assembly, homodimer. Probably interacts with PlsY.

Its subcellular location is the cytoplasm. The catalysed reaction is a fatty acyl-[ACP] + phosphate = an acyl phosphate + holo-[ACP]. It functions in the pathway lipid metabolism; phospholipid metabolism. Its function is as follows. Catalyzes the reversible formation of acyl-phosphate (acyl-PO(4)) from acyl-[acyl-carrier-protein] (acyl-ACP). This enzyme utilizes acyl-ACP as fatty acyl donor, but not acyl-CoA. The sequence is that of Phosphate acyltransferase from Halalkalibacterium halodurans (strain ATCC BAA-125 / DSM 18197 / FERM 7344 / JCM 9153 / C-125) (Bacillus halodurans).